Consider the following 153-residue polypeptide: MTSLLLFGASEGGLFDFDATLPLMAAQVVLLTFILNALFFKPVGRVVEDREDYVLTSRAEAKKKLAEVEKLENDLKNQLKEARKAAQQVISEAEEDSEKLYKEALNLANSEANASREQARREIDSQRDSALKKLKSDSDKLGDLIVERLLAAK.

The chain crosses the membrane as a helical span at residues 20–40 (TLPLMAAQVVLLTFILNALFF).

Belongs to the ATPase B chain family. In terms of assembly, F-type ATPases have 2 components, F(1) - the catalytic core - and F(0) - the membrane proton channel. F(1) has five subunits: alpha(3), beta(3), gamma(1), delta(1), epsilon(1). F(0) has four main subunits: a(1), b(1), b'(1) and c(10-14). The alpha and beta chains form an alternating ring which encloses part of the gamma chain. F(1) is attached to F(0) by a central stalk formed by the gamma and epsilon chains, while a peripheral stalk is formed by the delta, b and b' chains.

It localises to the cellular thylakoid membrane. In terms of biological role, f(1)F(0) ATP synthase produces ATP from ADP in the presence of a proton or sodium gradient. F-type ATPases consist of two structural domains, F(1) containing the extramembraneous catalytic core and F(0) containing the membrane proton channel, linked together by a central stalk and a peripheral stalk. During catalysis, ATP synthesis in the catalytic domain of F(1) is coupled via a rotary mechanism of the central stalk subunits to proton translocation. Component of the F(0) channel, it forms part of the peripheral stalk, linking F(1) to F(0). The b'-subunit is a diverged and duplicated form of b found in plants and photosynthetic bacteria. The chain is ATP synthase subunit b' from Prochlorococcus marinus (strain SARG / CCMP1375 / SS120).